The following is a 1250-amino-acid chain: Cell adhesion molecule-related/down-regulated by oncogenes (1250 aa).

The N-terminal stretch at 1–24 (MHPDLGPLWTLLYVLVILCSSVSS) is a signal peptide. The Extracellular segment spans residues 25–962 (DLAPYFISEP…SPARSSDMLY (938 aa)). Ig-like C2-type domains are found at residues 28-113 (PYFI…ATVS), 119-203 (DFDS…LKVE), 224-302 (PALS…KHVT), 309-395 (EHAS…GRLQ), and 404-515 (PVIV…AFLT). A disulfide bond links C49 and C96. 6 N-linked (GlcNAc...) asparagine glycosylation sites follow: N99, N179, N286, N293, N341, and N426. 2 cysteine pairs are disulfide-bonded: C140–C190 and C242–C289. Cystine bridges form between C332-C379 and C425-C499. Positions 524–534 (KAESVTPSEAS) are enriched in polar residues. The segment at 524–547 (KAESVTPSEASQNDERDPQDGSES) is disordered. N569 carries an N-linked (GlcNAc...) asparagine glycan. 3 consecutive Fibronectin type-III domains span residues 572 to 673 (VPDA…SKEK), 719 to 814 (APDR…VAGF), and 822 to 922 (PITG…TKVK). Residue N869 is glycosylated (N-linked (GlcNAc...) asparagine). Positions 929-951 (DYPVKELSTPPSSSGNAGNVGPA) are disordered. Residues 963-983 (LIVGCVLGVMVLILMVFIALC) form a helical membrane-spanning segment. Residues 984-1250 (LWKSRQQSTI…SVVLQQAQET (267 aa)) are Cytoplasmic-facing. Disordered regions lie at residues 1178-1208 (DNIS…AEDK) and 1223-1250 (DCGE…AQET). The span at 1193–1208 (EFSRGDSSGHSEAEDK) shows a compositional bias: basic and acidic residues.

Part of a complex that contains BOC, CDON, NEO1, cadherins and CTNNB1. Interacts with NTN3. Interacts with DHH, IHH and SHH. Post-translationally, N-glycosylated. As to expression, highly expressed in somites and the dorsal lips of the neural tube during embryogenesis. Detected at very low levels in adult tissues.

Its subcellular location is the cell membrane. In terms of biological role, component of a cell-surface receptor complex that mediates cell-cell interactions between muscle precursor cells. Promotes differentiation of myogenic cells. Required for response to NTN3 and activation of NFATC3. In Mus musculus (Mouse), this protein is Cell adhesion molecule-related/down-regulated by oncogenes (Cdon).